The sequence spans 345 residues: Selenide, water dikinase (345 aa).

Residue cysteine 16 is part of the active site. Residues lysine 19 and 45 to 47 each bind ATP; that span reads TSE. Aspartate 48 contributes to the Mg(2+) binding site. Residues aspartate 65, aspartate 88, and 136–138 contribute to the ATP site; that span reads GHT. Aspartate 88 contacts Mg(2+). Aspartate 224 lines the Mg(2+) pocket.

Belongs to the selenophosphate synthase 1 family. Class I subfamily. Homodimer. Mg(2+) is required as a cofactor.

It catalyses the reaction hydrogenselenide + ATP + H2O = selenophosphate + AMP + phosphate + 2 H(+). In terms of biological role, synthesizes selenophosphate from selenide and ATP. In Aliarcobacter butzleri (strain RM4018) (Arcobacter butzleri), this protein is Selenide, water dikinase.